A 297-amino-acid polypeptide reads, in one-letter code: Tyrosine recombinase XerD (297 aa).

The region spanning 1–86 (MNDLIEDFLH…SLRSFFHYLM (86 aa)) is the Core-binding (CB) domain. The region spanning 107 to 291 (GLPKVLNLDD…TKLRLKDVYK (185 aa)) is the Tyr recombinase domain. Residues Arg147, Lys171, His243, Arg246, and His269 contribute to the active site. Tyr278 functions as the O-(3'-phospho-DNA)-tyrosine intermediate in the catalytic mechanism.

Belongs to the 'phage' integrase family. XerD subfamily. In terms of assembly, forms a cyclic heterotetrameric complex composed of two molecules of XerC and two molecules of XerD.

It is found in the cytoplasm. Site-specific tyrosine recombinase, which acts by catalyzing the cutting and rejoining of the recombining DNA molecules. The XerC-XerD complex is essential to convert dimers of the bacterial chromosome into monomers to permit their segregation at cell division. It also contributes to the segregational stability of plasmids. In Listeria monocytogenes serotype 4b (strain F2365), this protein is Tyrosine recombinase XerD.